A 328-amino-acid chain; its full sequence is Aspartate carbamoyltransferase catalytic subunit (328 aa).

Carbamoyl phosphate is bound by residues arginine 64 and threonine 65. L-aspartate is bound at residue lysine 92. The carbamoyl phosphate site is built by arginine 114, histidine 144, and glutamine 147. Arginine 177 and arginine 232 together coordinate L-aspartate. Glycine 273 and proline 274 together coordinate carbamoyl phosphate.

This sequence belongs to the aspartate/ornithine carbamoyltransferase superfamily. ATCase family. Heterododecamer (2C3:3R2) of six catalytic PyrB chains organized as two trimers (C3), and six regulatory PyrI chains organized as three dimers (R2).

The catalysed reaction is carbamoyl phosphate + L-aspartate = N-carbamoyl-L-aspartate + phosphate + H(+). It functions in the pathway pyrimidine metabolism; UMP biosynthesis via de novo pathway; (S)-dihydroorotate from bicarbonate: step 2/3. Its function is as follows. Catalyzes the condensation of carbamoyl phosphate and aspartate to form carbamoyl aspartate and inorganic phosphate, the committed step in the de novo pyrimidine nucleotide biosynthesis pathway. This Halorhodospira halophila (strain DSM 244 / SL1) (Ectothiorhodospira halophila (strain DSM 244 / SL1)) protein is Aspartate carbamoyltransferase catalytic subunit.